Here is a 276-residue protein sequence, read N- to C-terminus: Dermonecrotic toxin LlSicTox-alphaIV1i (276 aa).

Residue histidine 5 is part of the active site. The Mg(2+) site is built by glutamate 25 and aspartate 27. Histidine 41 serves as the catalytic Nucleophile. Intrachain disulfides connect cysteine 45–cysteine 51 and cysteine 47–cysteine 193. A Mg(2+)-binding site is contributed by aspartate 85.

The protein belongs to the arthropod phospholipase D family. Class II subfamily. The cofactor is Mg(2+). As to expression, expressed by the venom gland.

It is found in the secreted. The catalysed reaction is an N-(acyl)-sphingosylphosphocholine = an N-(acyl)-sphingosyl-1,3-cyclic phosphate + choline. It catalyses the reaction an N-(acyl)-sphingosylphosphoethanolamine = an N-(acyl)-sphingosyl-1,3-cyclic phosphate + ethanolamine. The enzyme catalyses a 1-acyl-sn-glycero-3-phosphocholine = a 1-acyl-sn-glycero-2,3-cyclic phosphate + choline. It carries out the reaction a 1-acyl-sn-glycero-3-phosphoethanolamine = a 1-acyl-sn-glycero-2,3-cyclic phosphate + ethanolamine. Dermonecrotic toxins cleave the phosphodiester linkage between the phosphate and headgroup of certain phospholipids (sphingolipid and lysolipid substrates), forming an alcohol (often choline) and a cyclic phosphate. This toxin acts on sphingomyelin (SM). It may also act on ceramide phosphoethanolamine (CPE), lysophosphatidylcholine (LPC) and lysophosphatidylethanolamine (LPE), but not on lysophosphatidylserine (LPS), and lysophosphatidylglycerol (LPG). It acts by transphosphatidylation, releasing exclusively cyclic phosphate products as second products. Induces dermonecrosis, hemolysis, increased vascular permeability, edema, inflammatory response, and platelet aggregation. The protein is Dermonecrotic toxin LlSicTox-alphaIV1i of Loxosceles laeta (South American recluse spider).